A 540-amino-acid chain; its full sequence is Chaperonin GroEL (540 aa).

ATP contacts are provided by residues 29 to 32, 86 to 90, glycine 413, 476 to 478, and aspartate 492; these read TLGP, DGTTT, and NAA.

This sequence belongs to the chaperonin (HSP60) family. As to quaternary structure, forms a cylinder of 14 subunits composed of two heptameric rings stacked back-to-back. Interacts with the co-chaperonin GroES.

The protein localises to the cytoplasm. It catalyses the reaction ATP + H2O + a folded polypeptide = ADP + phosphate + an unfolded polypeptide.. Functionally, together with its co-chaperonin GroES, plays an essential role in assisting protein folding. The GroEL-GroES system forms a nano-cage that allows encapsulation of the non-native substrate proteins and provides a physical environment optimized to promote and accelerate protein folding. This Streptococcus pneumoniae (strain Hungary19A-6) protein is Chaperonin GroEL.